Reading from the N-terminus, the 711-residue chain is Long-chain-fatty-acid--CoA ligase 4 (711 aa).

The chain crosses the membrane as a helical; Signal-anchor for type III membrane protein span at residues 8 to 28; it reads LTIILLPVHLLITIYSALIFI. The Cytoplasmic segment spans residues 29–711; it reads PWYFLTNAKK…KDIERMYGGK (683 aa). Position 447 is a phosphoserine (serine 447).

Belongs to the ATP-dependent AMP-binding enzyme family. Requires Mg(2+) as cofactor. Abundant in steroidogenic tissues, also found in the kidney, brain and liver.

It is found in the mitochondrion outer membrane. The protein resides in the peroxisome membrane. Its subcellular location is the microsome membrane. The protein localises to the endoplasmic reticulum membrane. It localises to the cell membrane. The catalysed reaction is a long-chain fatty acid + ATP + CoA = a long-chain fatty acyl-CoA + AMP + diphosphate. It catalyses the reaction (5Z,8Z,11Z,14Z)-eicosatetraenoate + ATP + CoA = (5Z,8Z,11Z,14Z)-eicosatetraenoyl-CoA + AMP + diphosphate. It carries out the reaction 15-hydroxy-(5Z,8Z,11Z,13E)-eicosatetraenoate + ATP + CoA = 15-hydroxy-(5Z,8Z,11Z,13E)-eicosatetraenoyl-CoA + AMP + diphosphate. The enzyme catalyses 12-hydroxy-(5Z,8Z,10E,14Z)-eicosatetraenoate + ATP + CoA = 12-hydroxy-(5Z,8Z,10E,14Z)-eicosatetraenoyl-CoA + AMP + diphosphate. The catalysed reaction is 5-hydroxy-(6E,8Z,11Z,14Z)-eicosatetraenoate + ATP + CoA = 5-hydroxy-(6E,8Z,11Z,14Z)-eicosatetraenoyl-CoA + AMP + diphosphate. It catalyses the reaction 5,6-epoxy-(8Z,11Z,14Z)-eicosatrienoate + ATP + CoA = 5,6-epoxy-(8Z,11Z,14Z)-eicosatrienoyl-CoA + AMP + diphosphate. It carries out the reaction 14,15-epoxy-(5Z,8Z,11Z)-eicosatrienoate + ATP + CoA = 14,15-epoxy-(5Z,8Z,11Z)-eicosatrienoyl-CoA + AMP + diphosphate. The enzyme catalyses 11,12-epoxy-(5Z,8Z,14Z)-eicosatrienoate + ATP + CoA = 11,12-epoxy-(5Z,8Z,14Z)-eicosatrienoyl-CoA + AMP + diphosphate. The catalysed reaction is 8,9-epoxy-(5Z,11Z,14Z)-eicosatrienoate + ATP + CoA = 8,9-epoxy-(5Z,11Z,14Z)-eicosatrienoyl-CoA + AMP + diphosphate. It catalyses the reaction hexadecanoate + ATP + CoA = hexadecanoyl-CoA + AMP + diphosphate. It carries out the reaction (E)-hexadec-2-enoate + ATP + CoA = (2E)-hexadecenoyl-CoA + AMP + diphosphate. Its activity is regulated as follows. Both triacsin C and rosiglitazone inhibit arachidonoyl-CoA ligase activity. Catalyzes the conversion of long-chain fatty acids to their active form acyl-CoA for both synthesis of cellular lipids, and degradation via beta-oxidation. Preferentially activates arachidonate and eicosapentaenoate as substrates. Preferentially activates 8,9-EET &gt; 14,15-EET &gt; 5,6-EET &gt; 11,12-EET. Modulates glucose-stimulated insulin secretion by regulating the levels of unesterified EETs. Modulates prostaglandin E2 secretion. The protein is Long-chain-fatty-acid--CoA ligase 4 (Acsl4) of Mus musculus (Mouse).